Reading from the N-terminus, the 541-residue chain is NAD(P)H-quinone oxidoreductase subunit 2 A, chloroplastic (541 aa).

14 helical membrane-spanning segments follow: residues 24–44 (LLLF…GLIL), 57–77 (IPWL…ALLF), 99–119 (IFQF…VEYI), 124–144 (MAIT…MFLC), 149–169 (FITI…LSGY), 183–203 (YLLM…WLYG), 227–247 (PGIS…LSPA), 289–309 (ILSP…AASA), 326–346 (WHLL…LIAI), 354–374 (MLAY…IVGD), 385–405 (YMLF…LFGL), 426–446 (ALSL…AGFF), 449–469 (LYLF…IGLL), and 515–535 (MIVC…IIAI).

The protein belongs to the complex I subunit 2 family. NDH is composed of at least 16 different subunits, 5 of which are encoded in the nucleus.

The protein resides in the plastid. Its subcellular location is the chloroplast thylakoid membrane. The catalysed reaction is a plastoquinone + NADH + (n+1) H(+)(in) = a plastoquinol + NAD(+) + n H(+)(out). The enzyme catalyses a plastoquinone + NADPH + (n+1) H(+)(in) = a plastoquinol + NADP(+) + n H(+)(out). In terms of biological role, NDH shuttles electrons from NAD(P)H:plastoquinone, via FMN and iron-sulfur (Fe-S) centers, to quinones in the photosynthetic chain and possibly in a chloroplast respiratory chain. The immediate electron acceptor for the enzyme in this species is believed to be plastoquinone. Couples the redox reaction to proton translocation, and thus conserves the redox energy in a proton gradient. This chain is NAD(P)H-quinone oxidoreductase subunit 2 A, chloroplastic, found in Coffea arabica (Arabian coffee).